The sequence spans 375 residues: Erythronate-4-phosphate dehydrogenase (375 aa).

Positions 45 and 66 each coordinate substrate. Residues Asp-146, Thr-175, 206 to 208 (ASR), and Asp-232 contribute to the NAD(+) site. Arg-208 is an active-site residue. Residue Glu-237 is part of the active site. The Proton donor role is filled by His-254. Gly-257 provides a ligand contact to NAD(+). Residue Tyr-258 participates in substrate binding.

The protein belongs to the D-isomer specific 2-hydroxyacid dehydrogenase family. PdxB subfamily. Homodimer.

It localises to the cytoplasm. The enzyme catalyses 4-phospho-D-erythronate + NAD(+) = (R)-3-hydroxy-2-oxo-4-phosphooxybutanoate + NADH + H(+). It participates in cofactor biosynthesis; pyridoxine 5'-phosphate biosynthesis; pyridoxine 5'-phosphate from D-erythrose 4-phosphate: step 2/5. Catalyzes the oxidation of erythronate-4-phosphate to 3-hydroxy-2-oxo-4-phosphonooxybutanoate. The chain is Erythronate-4-phosphate dehydrogenase from Photorhabdus laumondii subsp. laumondii (strain DSM 15139 / CIP 105565 / TT01) (Photorhabdus luminescens subsp. laumondii).